We begin with the raw amino-acid sequence, 167 residues long: Transmembrane protein B169L (167 aa).

2 helical membrane-spanning segments follow: residues 28-48 (NPFI…FAIC) and 60-80 (TAIY…YVLN). An N-linked (GlcNAc...) asparagine; by host glycan is attached at asparagine 88.

This sequence belongs to the asfivirus B169L family.

It localises to the host membrane. The protein resides in the virion. This is Transmembrane protein B169L from African swine fever virus (isolate Tick/Malawi/Lil 20-1/1983) (ASFV).